The chain runs to 348 residues: Protein pelota homolog (348 aa).

This sequence belongs to the eukaryotic release factor 1 family. Pelota subfamily. As to quaternary structure, monomer. A divalent metal cation is required as a cofactor.

The protein resides in the cytoplasm. Its function is as follows. May function in recognizing stalled ribosomes, interact with stem-loop structures in stalled mRNA molecules, and effect endonucleolytic cleavage of the mRNA. May play a role in the release non-functional ribosomes and degradation of damaged mRNAs. Has endoribonuclease activity. The sequence is that of Protein pelota homolog from Methanococcus maripaludis (strain DSM 14266 / JCM 13030 / NBRC 101832 / S2 / LL).